A 518-amino-acid chain; its full sequence is MRDPSSLYSGFPAGSQYESVEPPSLALLSSIDQEQLPVATGQSYNHSVQHWPQPWPPLSLYREGGTWSPDRGSMYGLSPGTHEGSCTHTHEGPKDSMAGDQTRSRKSKKKNYHRYNKPPYSYLAMIALVIQNSPEKRLKLSQILKEVSTLFPFFNGDYMGWKDSIRHNLSSSDCFKKILKDPGKPQAKGNFWTVDVSRIPLDAMKLQNTALTRGGSDYFVQDLAPYILHNYKYEHNAGAYGHQMPPSHARSLSLAEDSQQTNTGGKLNTSFMIDSLLHDLQEVDLPDASRNLENQRISPAVAMNNMWSSAPLLYTHSKPTRNARSPGLSTIHSTYSSSSSSISTISPVGFQKEQEKSGRQTQRVGHPIKRSREDDDCSTTSSDPDTGNYSPIEPPKKMPLLSLDLPTSYTKSVAPNVVAPPSVLPFFHFPRFTYYNYGPSPYMTPPYWGFPHPTNSGGDSPRGPQSPLDLDNMLRAMPPNKSVFDVLTSHPGDLVHPSFLSQCLGSSGSPYPSRQGLM.

The segment at 72-113 (GSMYGLSPGTHEGSCTHTHEGPKDSMAGDQTRSRKSKKKNYH) is disordered. Residues 104 to 113 (SRKSKKKNYH) show a composition bias toward basic residues. Residues 117–213 (KPPYSYLAMI…MKLQNTALTR (97 aa)) constitute a DNA-binding region (fork-head). The tract at residues 318 to 397 (KPTRNARSPG…NYSPIEPPKK (80 aa)) is disordered. The span at 329–346 (STIHSTYSSSSSSISTIS) shows a compositional bias: low complexity. Residues 380 to 506 (TSSDPDTGNY…PSFLSQCLGS (127 aa)) are SMAD-interaction domain (SID). Residues 405–409 (LPTSY) carry the Fast/FoxH1 motif 1 (FM1) motif. Positions 415 to 421 (PNVVAPP) match the Fast/FoxH1 motif 2 (FM2) motif. Positions 470–491 (LDNMLRAMPPNKSVFDVLTSHP) match the SMAD interaction motif (SIM) motif.

As to quaternary structure, ARF1 contains 2 smad2s, 1 smad4 and 1 foxh1/fast-1 protein. Interaction with smad4 is most likely indirect through interaction with the MH2 domain of smad2. Binds to the MH2 domain of smad3, which can incorporate into the ARF1 complex. The ARF1 and ARF2 complexes are activated by distinct TGF-beta family members; formation of ARF1 is promoted by activin. Interacts (via Fork-head domain) with gtf2ird1/wbscr11 (via repeats 4-5). As to expression, highly expressed in the animal cap (prospective ectoderm) and prospective mesoderm of stage 10.25 embryos.

It is found in the nucleus. Transcriptional activator. Recognizes and binds to the DNA sequence 5'-TGT[GT][GT]ATT-3'. Upon TGF-beta induction, forms a transcriptionally active complex with smad2 and smad4 called activin-responsive factor 1 (ARF1), which binds a site on the mix-B/mix.2 promoter called the activin response element (ARE). Binds to activated smads and the ARE with much lower affinity than fast3. Necessary for the first steps in mesoderm specification, directly inducing mesodermal genes. Acts with fast3 to control the convergent extension movements of gastrulation. Binds to the proximal element (PE) of the gsc gene and cooperates with gtf2ird1/wbscr11 and SMAD proteins to regulate gsc transcription. In Xenopus laevis (African clawed frog), this protein is Forkhead box protein H1 (foxh1).